Reading from the N-terminus, the 452-residue chain is Diphthine methyltransferase (452 aa).

WD repeat units lie at residues 79-130 (PLVE…SHVL), 131-185 (EPLS…RPRL), 186-229 (QKVA…RVPG), 230-273 (KFLF…RNMK), 274-313 (QPLA…LNCQ), 314-403 (KAME…TEGM), and 404-448 (RKNG…HLWE). A Phosphoserine modification is found at Ser-353. Positions 371-402 (SELPTPCHECREDNDGEGHARPQSGMKPLTEG) are disordered. The span at 378–390 (HECREDNDGEGHA) shows a compositional bias: basic and acidic residues.

This sequence belongs to the DPH7 family. In terms of assembly, interacts with INCA1.

It carries out the reaction diphthine methyl ester-[translation elongation factor 2] + H2O = diphthine-[translation elongation factor 2] + methanol + H(+). It participates in protein modification; peptidyl-diphthamide biosynthesis. In terms of biological role, catalyzes the demethylation of diphthine methyl ester to form diphthine, an intermediate diphthamide biosynthesis, a post-translational modification of histidine which occurs in translation elongation factor 2 (EEF2) which can be ADP-ribosylated by diphtheria toxin and by Pseudomonas exotoxin A (Eta). This is Diphthine methyltransferase (DPH7) from Homo sapiens (Human).